An 87-amino-acid polypeptide reads, in one-letter code: uncharacterized protein (87 aa).

Residues 21–41 (LSSSLYSVAFFLFFFPNFLFF) form a helical membrane-spanning segment.

It localises to the membrane. This is an uncharacterized protein from Saccharomyces cerevisiae (strain ATCC 204508 / S288c) (Baker's yeast).